The sequence spans 460 residues: MTNYAIILAAGKGTRMTSDLPKVLHKVSGLTMLEHVFRSVKAISPEKSVTVIGHKSEMVRAVLADQSAFVHQTEQLGTGHAVMMAETQLEGLEGHTLVIAGDTPLITGESLKSLIDFHVNHKNVATILTATAQDPFGYGRIVRNKDGEVIKIVEQKDANEYEQQLKEINTGTYVFDNKRLFEALKCITTNNAQGEYYLTDVVTIFRANKEKVGAYILRDFNESLGVNDRVALATAETVMRQRITQKHMVNGVTFQNPETVYIESDVEIAPDVLIEGNVTLKGRTHIGSGTVLTNGTYIVDSEIGDNCVVTNSMIESSVLAAGVTVGPYAHLRPGTTLDREVHIGNFVEVKGSHIGEKTKAGHLTYIGNAQVGSSVNVGAGTITVNYDGQNKYETVIGDHAFIGSNSTLIAPLEVGDHALTAAGSTISKTVPIDSIAIGRSRQVTKEGYAKRLAHHPSRSK.

The segment at 1–229 is pyrophosphorylase; the sequence is MTNYAIILAA…FNESLGVNDR (229 aa). UDP-N-acetyl-alpha-D-glucosamine is bound by residues 8–11, Lys-22, Gln-72, and 77–78; these read LAAG and GT. Residue Asp-102 participates in Mg(2+) binding. Residues Gly-139, Glu-154, Asn-169, and Asn-227 each coordinate UDP-N-acetyl-alpha-D-glucosamine. Residue Asn-227 participates in Mg(2+) binding. Residues 230 to 250 are linker; it reads VALATAETVMRQRITQKHMVN. The interval 251–460 is N-acetyltransferase; sequence GVTFQNPETV…RLAHHPSRSK (210 aa). UDP-N-acetyl-alpha-D-glucosamine-binding residues include Arg-332 and Lys-350. His-362 functions as the Proton acceptor in the catalytic mechanism. Residues Tyr-365 and Asn-376 each contribute to the UDP-N-acetyl-alpha-D-glucosamine site. Acetyl-CoA contacts are provided by residues Ala-379, 385–386, Ser-404, Ala-422, and Arg-439; that span reads NY.

In the N-terminal section; belongs to the N-acetylglucosamine-1-phosphate uridyltransferase family. This sequence in the C-terminal section; belongs to the transferase hexapeptide repeat family. Homotrimer. Mg(2+) serves as cofactor.

The protein localises to the cytoplasm. The enzyme catalyses alpha-D-glucosamine 1-phosphate + acetyl-CoA = N-acetyl-alpha-D-glucosamine 1-phosphate + CoA + H(+). The catalysed reaction is N-acetyl-alpha-D-glucosamine 1-phosphate + UTP + H(+) = UDP-N-acetyl-alpha-D-glucosamine + diphosphate. It functions in the pathway nucleotide-sugar biosynthesis; UDP-N-acetyl-alpha-D-glucosamine biosynthesis; N-acetyl-alpha-D-glucosamine 1-phosphate from alpha-D-glucosamine 6-phosphate (route II): step 2/2. The protein operates within nucleotide-sugar biosynthesis; UDP-N-acetyl-alpha-D-glucosamine biosynthesis; UDP-N-acetyl-alpha-D-glucosamine from N-acetyl-alpha-D-glucosamine 1-phosphate: step 1/1. Its pathway is bacterial outer membrane biogenesis; LPS lipid A biosynthesis. Functionally, catalyzes the last two sequential reactions in the de novo biosynthetic pathway for UDP-N-acetylglucosamine (UDP-GlcNAc). The C-terminal domain catalyzes the transfer of acetyl group from acetyl coenzyme A to glucosamine-1-phosphate (GlcN-1-P) to produce N-acetylglucosamine-1-phosphate (GlcNAc-1-P), which is converted into UDP-GlcNAc by the transfer of uridine 5-monophosphate (from uridine 5-triphosphate), a reaction catalyzed by the N-terminal domain. This Streptococcus pyogenes serotype M28 (strain MGAS6180) protein is Bifunctional protein GlmU.